The chain runs to 176 residues: Large ribosomal subunit protein uL30 (176 aa).

The protein belongs to the universal ribosomal protein uL30 family. As to quaternary structure, part of the 50S ribosomal subunit.

This Pyrobaculum arsenaticum (strain DSM 13514 / JCM 11321 / PZ6) protein is Large ribosomal subunit protein uL30.